The following is a 727-amino-acid chain: NADH-ubiquinone oxidoreductase 75 kDa subunit, mitochondrial (727 aa).

Residues 1–23 (MLRIPVRKALVVLSKSPKGCVRT) constitute a mitochondrion transit peptide. In terms of domain architecture, 2Fe-2S ferredoxin-type spans 30–108 (NLIEVFVDGQ…GWNILTNSKK (79 aa)). [2Fe-2S] cluster-binding residues include Cys64, Cys75, and Cys78. At Lys84 the chain carries N6-acetyllysine. A [2Fe-2S] cluster-binding site is contributed by Cys92. The 4Fe-4S His(Cys)3-ligated-type domain maps to 108–147 (KSKKAREGVMEFLLANHPLDCPICDQGGECDLQDQSMMFG). [4Fe-4S] cluster contacts are provided by His124, Cys128, Cys131, Cys137, Cys176, Cys179, Cys182, and Cys226. The 57-residue stretch at 245–301 (TRKTESIDVMDAVGSNIVVSTRTGEVMRILPRMHEDINEEWISDKTRFAYDGLKRQR) folds into the 4Fe-4S Mo/W bis-MGD-type domain. N6-acetyllysine is present on residues Lys467, Lys499, and Lys709.

This sequence belongs to the complex I 75 kDa subunit family. Core subunit of respiratory chain NADH dehydrogenase (Complex I) which is composed of 45 different subunits. This is the largest subunit of complex I and it is a component of the iron-sulfur (IP) fragment of the enzyme. Complex I associates with ubiquinol-cytochrome reductase complex (Complex III) to form supercomplexes. Interacts with MDM2 and AKAP1. It depends on [2Fe-2S] cluster as a cofactor. [4Fe-4S] cluster serves as cofactor.

Its subcellular location is the mitochondrion inner membrane. It carries out the reaction a ubiquinone + NADH + 5 H(+)(in) = a ubiquinol + NAD(+) + 4 H(+)(out). Core subunit of the mitochondrial membrane respiratory chain NADH dehydrogenase (Complex I) which catalyzes electron transfer from NADH through the respiratory chain, using ubiquinone as an electron acceptor. Essential for catalysing the entry and efficient transfer of electrons within complex I. Plays a key role in the assembly and stability of complex I and participates in the association of complex I with ubiquinol-cytochrome reductase complex (Complex III) to form supercomplexes. This chain is NADH-ubiquinone oxidoreductase 75 kDa subunit, mitochondrial (NDUFS1), found in Pan troglodytes (Chimpanzee).